The primary structure comprises 269 residues: Regulatory protein RecX (269 aa).

It belongs to the RecX family.

It is found in the cytoplasm. Functionally, modulates RecA activity. The sequence is that of Regulatory protein RecX from Geobacillus thermodenitrificans (strain NG80-2).